The sequence spans 231 residues: Ribose-5-phosphate isomerase A (231 aa).

Residues 28-31, 83-86, and 96-99 contribute to the substrate site; these read TGST, DGAD, and KGGG. Catalysis depends on E105, which acts as the Proton acceptor. K123 provides a ligand contact to substrate.

Belongs to the ribose 5-phosphate isomerase family. As to quaternary structure, homodimer.

The catalysed reaction is aldehydo-D-ribose 5-phosphate = D-ribulose 5-phosphate. It participates in carbohydrate degradation; pentose phosphate pathway; D-ribose 5-phosphate from D-ribulose 5-phosphate (non-oxidative stage): step 1/1. Catalyzes the reversible conversion of ribose-5-phosphate to ribulose 5-phosphate. The protein is Ribose-5-phosphate isomerase A of Sinorhizobium fredii (strain NBRC 101917 / NGR234).